We begin with the raw amino-acid sequence, 691 residues long: Amino-acid acetyltransferase, mitochondrial (691 aa).

The segment covering 1 to 27 (MSSTSLAWPRTAKSSLLQSADFSSTSK) has biased composition (polar residues). Disordered stretches follow at residues 1–29 (MSSTSLAWPRTAKSSLLQSADFSSTSKGY) and 65–95 (RLKAQHSPKPQVKEPEKESKDDAPQPLPSGV). Residues 75–87 (QVKEPEKESKDDA) are compositionally biased toward basic and acidic residues. The N-acetyltransferase domain occupies 512–681 (NRPRMSLDDP…YEAVCRSIQP (170 aa)).

The protein belongs to the acetyltransferase family.

The protein resides in the mitochondrion. The catalysed reaction is L-glutamate + acetyl-CoA = N-acetyl-L-glutamate + CoA + H(+). It participates in amino-acid biosynthesis; L-arginine biosynthesis; N(2)-acetyl-L-ornithine from L-glutamate: step 1/4. N-acetylglutamate synthase involved in arginine biosynthesis. The sequence is that of Amino-acid acetyltransferase, mitochondrial (arg2) from Aspergillus terreus (strain NIH 2624 / FGSC A1156).